A 570-amino-acid polypeptide reads, in one-letter code: Urease subunit alpha (570 aa).

The region spanning 131–570 (GGFDSHIHFI…LPMAQRYFMY (440 aa)) is the Urease domain. Ni(2+)-binding residues include H136, H138, and K219. An N6-carboxylysine modification is found at K219. Substrate is bound at residue H221. Residues H248 and H274 each coordinate Ni(2+). The Proton donor role is filled by H322. D362 contacts Ni(2+).

This sequence belongs to the metallo-dependent hydrolases superfamily. Urease alpha subunit family. In terms of assembly, heterotrimer of UreA (gamma), UreB (beta) and UreC (alpha) subunits. Three heterotrimers associate to form the active enzyme. Requires Ni cation as cofactor. In terms of processing, carboxylation allows a single lysine to coordinate two nickel ions.

The protein localises to the cytoplasm. It carries out the reaction urea + 2 H2O + H(+) = hydrogencarbonate + 2 NH4(+). It functions in the pathway nitrogen metabolism; urea degradation; CO(2) and NH(3) from urea (urease route): step 1/1. This chain is Urease subunit alpha, found in Rhodopseudomonas palustris (strain BisB18).